Consider the following 346-residue polypeptide: E3 ubiquitin-protein ligase ARK2C (346 aa).

Disordered stretches follow at residues 23–76 and 267–288; these read PFQR…QHSG and PHKY…GEES. Residues 266–268 form a ubiquitin binding region; it reads FPH. The span at 275-284 shows a compositional bias: basic and acidic residues; it reads PQDGKGKKDE. C294 and C297 together coordinate Zn(2+). The segment at 294–335 adopts an RING-type; atypical zinc-finger fold; the sequence is CTICLSMLEDGEDVRRLPCMHLFHQLCVDQWLAMSKKCPICR. Positions 309 to 313 are ubiquitin binding; the sequence is RLPCM. Positions 317 and 320 each coordinate Zn(2+).

Belongs to the Arkadia family. As to quaternary structure, monomer; binding to the ubiquitin-conjugating enzyme E2 does not trigger homodimerization.

It is found in the nucleus. The enzyme catalyses S-ubiquitinyl-[E2 ubiquitin-conjugating enzyme]-L-cysteine + [acceptor protein]-L-lysine = [E2 ubiquitin-conjugating enzyme]-L-cysteine + N(6)-ubiquitinyl-[acceptor protein]-L-lysine.. Its activity is regulated as follows. Binds free ubiquitin non-covalently via its RING-type zinc finger. Ubiquitin-binding leads to enhance the E3 ubiquitin-protein ligase activity by stabilizing the ubiquitin-conjugating enzyme E2 (donor ubiquitin) in the 'closed' conformation and activating ubiquitin transfer. E3 ubiquitin-protein ligase that acts as a regulator of motor axon elongation. Required for efficient motor axon extension in the dorsal forelimb by enhancing the transcriptional responses of the SMAD1/SMAD5/SMAD8 effectors, which are activated downstream of BMP. Acts by mediating ubiquitination and degradation of SMAD inhibitors such as SMAD6, SMAD7, SKI and SNON isoform of SKIL. The chain is E3 ubiquitin-protein ligase ARK2C from Homo sapiens (Human).